A 1258-amino-acid polypeptide reads, in one-letter code: Cohesin subunit SA-1 (1258 aa).

Positions 1–84 are disordered; sequence MITSELPVLQ…HPQQNGEGEP (84 aa). The segment covering 10–19 has biased composition (polar residues); that stretch reads QDSTNETTAH. S24 carries the phosphoserine modification. Residues 53 to 62 show a composition bias toward basic and acidic residues; it reads SPGEKSRIEA. The region spanning 296–381 is the SCD domain; it reads FVHRYRDAIA…NRFKDRIVSM (86 aa). S756, S1062, and S1065 each carry phosphoserine. 2 disordered regions span residues 1055–1096 and 1129–1148; these read GGED…SLDN and MGDQ…DFLH. Positions 1062–1074 are enriched in low complexity; that stretch reads SVNSGSSSSKTSS. Residues 1076-1087 are compositionally biased toward basic residues; it reads RNKKGRPPLHKK. Position 1093 is a phosphoserine (S1093). The segment covering 1137 to 1146 has biased composition (basic and acidic residues); that stretch reads ESEHGSEPDF. K1161 participates in a covalent cross-link: Glycyl lysine isopeptide (Lys-Gly) (interchain with G-Cter in SUMO2).

This sequence belongs to the SCC3 family. In terms of assembly, cohesin complexes are composed of a heterodimer between a SMC1 protein (SMC1A or SMC1B) and SMC3, which are attached via their hinge domain, and RAD21 which link them at their heads, and one STAG protein (STAG1, STAG2 or STAG3). In cohesin complexes, STAG1 is mutually exclusive with STAG2 and STAG3. Interacts directly with RAD21 in cohesin complex. The cohesin complex interacts with the cohesin loading complex subunits NIPBL/Scc2 (via HEAT repeats) and MAU2/Scc4. NIPBL directly contacts all members of the complex, RAD21, SMC1A/B, SMC3 and STAG1. Phosphorylated by PLK1. The large dissociation of cohesin from chromosome arms during prophase is partly due to its phosphorylation.

It localises to the nucleus. Its subcellular location is the chromosome. The protein resides in the centromere. Component of cohesin complex, a complex required for the cohesion of sister chromatids after DNA replication. The cohesin complex apparently forms a large proteinaceous ring within which sister chromatids can be trapped. At anaphase, the complex is cleaved and dissociates from chromatin, allowing sister chromatids to segregate. The cohesin complex may also play a role in spindle pole assembly during mitosis. This chain is Cohesin subunit SA-1 (STAG1), found in Homo sapiens (Human).